We begin with the raw amino-acid sequence, 479 residues long: Adenylate kinase 8 (479 aa).

2 adenylate kinase regions span residues 58–258 (PRIV…TYVQ) and 269–471 (PRVL…SGII). 67 to 72 (ASGKTT) is an ATP binding site. Positions 87 to 113 (TLENLILNEFSYTATEARRLYLQRKTV) are NMP 1. Residues 140–143 (GIPE), Gln-147, and Arg-203 contribute to the AMP site. An LID 1 region spans residues 177–206 (GKRIDPQTGEIYHTTFDWPPESEIQNRLMV). ATP is bound at residue 278–283 (GSGKSL). Residues 298-327 (CCGQLLKEAVADRTTFGELIQPFFEKEMAV) are NMP 2. Residues 325–327 (MAV), 354–357 (GVPR), and Gln-361 contribute to the AMP site. An LID 2 region spans residues 391–424 (LRRIDPVTGERYHLMYKPPPTMEIQARLLQNPKD). Residue Arg-392 participates in ATP binding.

It belongs to the adenylate kinase family. Interacts with CFAP45 and CFAP52; CFAP45 and AK8 dimerization may create a cavity at the interface of the dimer that can accommodate AMP. As to expression, expressed in respiratory cells (at protein level).

The protein localises to the cytoplasm. The protein resides in the cytosol. It is found in the cytoskeleton. It localises to the cilium axoneme. It catalyses the reaction AMP + ATP = 2 ADP. The enzyme catalyses a 2'-deoxyribonucleoside 5'-diphosphate + ATP = a 2'-deoxyribonucleoside 5'-triphosphate + ADP. It carries out the reaction a ribonucleoside 5'-diphosphate + ATP = a ribonucleoside 5'-triphosphate + ADP. Nucleoside monophosphate (NMP) kinase that catalyzes the reversible transfer of the terminal phosphate group between nucleoside triphosphates and monophosphates. Has highest activity toward AMP, and weaker activity toward dAMP, CMP and dCMP. Also displays broad nucleoside diphosphate kinase activity. This chain is Adenylate kinase 8 (AK8), found in Homo sapiens (Human).